Here is a 428-residue protein sequence, read N- to C-terminus: Enolase (428 aa).

Q163 is a (2R)-2-phosphoglycerate binding site. Residue E205 is the Proton donor of the active site. Mg(2+) contacts are provided by D242, E286, and D313. 4 residues coordinate (2R)-2-phosphoglycerate: K338, R367, S368, and K389. K338 serves as the catalytic Proton acceptor.

Belongs to the enolase family. The cofactor is Mg(2+).

The protein resides in the cytoplasm. Its subcellular location is the secreted. The protein localises to the cell surface. The catalysed reaction is (2R)-2-phosphoglycerate = phosphoenolpyruvate + H2O. It functions in the pathway carbohydrate degradation; glycolysis; pyruvate from D-glyceraldehyde 3-phosphate: step 4/5. In terms of biological role, catalyzes the reversible conversion of 2-phosphoglycerate (2-PG) into phosphoenolpyruvate (PEP). It is essential for the degradation of carbohydrates via glycolysis. This Acidovorax sp. (strain JS42) protein is Enolase.